The sequence spans 576 residues: SNF1-like protein kinase ssp2 (576 aa).

The 252-residue stretch at 34-285 (YIIRETLGEG…IQEIRRDPWF (252 aa)) folds into the Protein kinase domain. ATP-binding positions include 40-48 (LGEGSFGKV) and Lys-63. Catalysis depends on Asp-156, which acts as the Proton acceptor. At Thr-189 the chain carries Phosphothreonine. The tract at residues 292–348 (YLRPMEEVQGSYADSRIVSKLGEAMGFSEDYIVEALRSDENNEVKEAYNLLHENQVI) is auto-inhibitory domain (AID). The UBA domain occupies 304–345 (ADSRIVSKLGEAMGFSEDYIVEALRSDENNEVKEAYNLLHEN). Ser-442 bears the Phosphoserine mark.

This sequence belongs to the protein kinase superfamily. CAMK Ser/Thr protein kinase family. SNF1 subfamily. In terms of assembly, component of the AMP-activated protein kinase complex also known as the SNF1 kinase complex (Snf1c), a heterotrimeric complex composed of a catalytic subunit alpha and 2 regulatory subunits beta (amk2) and gamma (cbs2). In terms of processing, phosphorylation at Thr-189 by ssp1 is required for nuclear entry in nutritionally stressed cells.

The protein localises to the cytoplasm. The protein resides in the nucleus. The catalysed reaction is L-seryl-[protein] + ATP = O-phospho-L-seryl-[protein] + ADP + H(+). The enzyme catalyses L-threonyl-[protein] + ATP = O-phospho-L-threonyl-[protein] + ADP + H(+). In terms of biological role, serine/threonine protein kinase essential for release from glucose repression via the phosphorylation of scr1 upon glucose deprivation. Catalytic subunit of the AMP-activated protein kinase complex also known as the SNF1 kinase complex (Snf1c), a central regulator of cellular energy homeostasis, which, in response to a fall in intracellular ATP levels, activates energy-producing pathways and inhibits energy-consuming processes. The complex phosphorylates histone H3 to form H3S10ph, which promotes H3K14ac formation, leading to transcriptional activation through TBP recruitment to the promoters. Regulates proper cell cycle exit and sexual differentiation. Also regulates ste11 levels under nitrogen deprivation. This is SNF1-like protein kinase ssp2 from Schizosaccharomyces pombe (strain 972 / ATCC 24843) (Fission yeast).